The primary structure comprises 384 residues: Epoxyqueuosine reductase (384 aa).

Aspartate 144 acts as the Proton donor in catalysis. Positions leucine 186–threonine 218 constitute a 4Fe-4S ferredoxin-type domain. [4Fe-4S] cluster is bound by residues cysteine 198, cysteine 201, cysteine 204, cysteine 208, cysteine 224, cysteine 251, cysteine 254, and cysteine 258.

Belongs to the QueG family. Monomer. Cob(II)alamin serves as cofactor. It depends on [4Fe-4S] cluster as a cofactor.

It localises to the cytoplasm. It carries out the reaction epoxyqueuosine(34) in tRNA + AH2 = queuosine(34) in tRNA + A + H2O. It functions in the pathway tRNA modification; tRNA-queuosine biosynthesis. Catalyzes the conversion of epoxyqueuosine (oQ) to queuosine (Q), which is a hypermodified base found in the wobble positions of tRNA(Asp), tRNA(Asn), tRNA(His) and tRNA(Tyr). The protein is Epoxyqueuosine reductase of Salmonella typhimurium (strain LT2 / SGSC1412 / ATCC 700720).